Here is a 591-residue protein sequence, read N- to C-terminus: Acyl-CoA-dependent acyltransferase MAC1 (591 aa).

The peroxisomal targeting signal type 1 stretch occupies residues 589-591 (ARL).

Belongs to the trichothecene O-acetyltransferase family.

The protein localises to the peroxisome. It participates in secondary metabolite biosynthesis. Functionally, acyl-CoA-dependent acyltransferase; part of the gene cluster that mediates the biosynthesis of mannosylerythritol lipids (MELs), surface-active substances that enhance the availability of water-insoluble substrates. Mannosylerythritol lipid production is responsible for hemolytic activity of Ustilago maydis. Depending on the number of acetyl groups, mannosylerythritol lipids can be differentiated into MEL A (fully acetylated), MEL B and MEL C (monoacetylated at R-6 and R-4, respectively), and the fully deacetylated MEL D. The first step in the pathway is the generation of mannosylerythritol by the glycosyltransferase EMT1 which catalyzes the transfer of GDP-mannose to the C-4 atom of meso-erythritol. This reaction has to be stereospecific, since only mannosyl-D-erythritol is generated. The produced disaccharide is subsequently acylated with fatty acids of various lengths derived from the peroxisomal beta-oxidation by the peroxisomal acyltransferases MAC1 and MAC2 at positions C-2 and C-3, repectively. The existence of MEL derivatives which carry an acetyl group at C-2 implies that at least MAC1 also accepts acetyl-CoA as a donor. The final step of MEL biosynthesis is the acetylation of the fully acylated mannosylerythritol lipids catalyzed by the acetyl-CoA-dependent acetyltransferase MAT1. MAT1 displays a relaxed regioselectivity and is able to transfer acetylgroups to both positions C-4 and C-6 of the mannosyl moiety. The polypeptide is Acyl-CoA-dependent acyltransferase MAC1 (Mycosarcoma maydis (Corn smut fungus)).